The chain runs to 724 residues: Phenylalanine ammonia-lyase (724 aa).

The active-site Proton donor/acceptor is the Y91. Positions 205–207 (ASG) form a cross-link, 5-imidazolinone (Ala-Gly). A 2,3-didehydroalanine (Ser) modification is found at S206. The (E)-cinnamate site is built by N265, Q357, R363, N393, K467, E495, and N498.

This sequence belongs to the PAL/histidase family. In terms of assembly, homotetramer. In terms of processing, contains an active site 4-methylidene-imidazol-5-one (MIO), which is formed autocatalytically by cyclization and dehydration of residues Ala-Ser-Gly.

The protein resides in the cytoplasm. The enzyme catalyses L-phenylalanine = (E)-cinnamate + NH4(+). The protein operates within phenylpropanoid metabolism; trans-cinnamate biosynthesis; trans-cinnamate from L-phenylalanine: step 1/1. Functionally, catalyzes the non-oxidative deamination of L-phenylalanine to form trans-cinnamic acid and a free ammonium ion. Facilitates the commitment step in phenylpropanoid pathways that produce secondary metabolites such as lignins, coumarins and flavonoids. This chain is Phenylalanine ammonia-lyase (PAL1), found in Mycosarcoma maydis (Corn smut fungus).